Reading from the N-terminus, the 280-residue chain is Eukaryotic translation initiation factor 3 subunit F-1 (280 aa).

Residues 8 to 138 (VRVHPVVLFQ…LRAYVCIQLG (131 aa)) enclose the MPN domain.

This sequence belongs to the eIF-3 subunit F family. Component of the eukaryotic translation initiation factor 3 (eIF-3) complex. The eIF-3 complex interacts with pix.

It is found in the cytoplasm. Its function is as follows. Component of the eukaryotic translation initiation factor 3 (eIF-3) complex, which is involved in protein synthesis of a specialized repertoire of mRNAs and, together with other initiation factors, stimulates binding of mRNA and methionyl-tRNAi to the 40S ribosome. The eIF-3 complex specifically targets and initiates translation of a subset of mRNAs involved in cell proliferation. This is Eukaryotic translation initiation factor 3 subunit F-1 from Drosophila yakuba (Fruit fly).